The primary structure comprises 384 residues: MPQLAGKLILAGLIPLGAWVLHGFASCNGLIQMFEDFGKQTVLSDGVTDYTGAFTGLEGLDRLLRTLLNFFWPVANGHDWALSLHAFMFAGQGVPLLVLNMLEGARPGNKSLVVSYVTVFGILYMVVGLAIMAPLYLFLHLLTSRTATAPSKAKVAVDPNTAKAVGFGVFVGYVLPTIFMSLPHPSLLSTDTKVLSVVFWQAVPLWASVCAYFASTALGQSATSRSSSNLPSALGAVYAASLIIATATHVATFAISANLSDTWSGIFTFLIPPNPFNTDMRISSFLEGATWFLQWDYTMMSLAYMVWAIGIRHGVEVPRSSHHFETLGKIALRSMAKLLVMGPIGAALSLVWERDQLLWQLDSESGEKGEKNRSRRMSRKWMFS.

A signal peptide spans 1–25 (MPQLAGKLILAGLIPLGAWVLHGFA). The chain crosses the membrane as a helical span at residues 82–102 (LSLHAFMFAGQGVPLLVLNML). A glycan (N-linked (GlcNAc...) asparagine) is linked at N109. The next 4 helical transmembrane spans lie at 119 to 139 (VFGI…YLFL), 164 to 184 (AVGF…SLPH), 194 to 214 (VLSV…AYFA), and 235 to 255 (GAVY…TFAI). An N-linked (GlcNAc...) asparagine glycan is attached at N258. 2 helical membrane-spanning segments follow: residues 291–311 (WFLQ…AIGI) and 330–350 (IALR…ALSL). N372 carries an N-linked (GlcNAc...) asparagine glycan.

This sequence belongs to the membrane-bound ascI terpene cyclase family.

It is found in the membrane. It carries out the reaction 16-hydroxy-ilicicolin A epoxide = ascofuranol. It functions in the pathway secondary metabolite biosynthesis; terpenoid biosynthesis. Epoxide hydrolase; part of the asc-2 gene cluster that mediates the biosynthesis of ascofuranone, a strong inhibitor of cyanide-insensitive alternative oxidases and a promising drug candidate against African trypanosomiasis. The first step in the pathway is performed by the non-reducing polyketide synthase ascC that produces orsellinic acid by condensing acetyl-CoA with 3 malonyl-CoA units. Orsellinic acid is then prenylated by the prenyltransferase ascA to yield ilicicolinic acid B. Ilicicolinic acid B is further reduced to ilicicolin B by the reductase ascB. The halogenase ascD then chlorinates ilicicolin B to produce ilicicolin A which is converted to ilicicolin A epoxide by the cytochrome P450 monooxygenase ascE that catalyzes stereoselective epoxidation of the terminal double bond of the prenyl group. Ilicicolin A epoxide is the last common precursor for the biosynthesis of ascofuranone and ascochlorin. The terpene cyclase ascF produces a monocyclic terpene, and the cyclization reaction is proposed to be initiated by protonation of the terminal epoxide of ilicicolin A epoxide to generate a monocyclic tertiarycation, which is followed by a series of hydride and methyl shifts with abstraction of proton, leading to the formation of the (14S,15R,19R)-trimethylcyclohexanone ring structure of ilicicolin C, which is finally reduced to ascochlorin by the dehydrogenase ascG. On the other hand, ilicicolin A epoxide is hydroxylated by the cytochrome P450 monooxygenase ascH, and the resultant product is cyclized by the terpene cyclase ascI to ascofuranol via protonation-initiated epoxide ring opening, which facilitates the 6-endo-tet cyclization to form the tetrahy-drofuran ring. Finally, ascofuranol is oxidized into ascofuranone by ascJ. This Acremonium egyptiacum (Oospora egyptiaca) protein is Terpene cyclase ascI.